Here is a 142-residue protein sequence, read N- to C-terminus: Transcriptional regulator MraZ (142 aa).

2 consecutive SpoVT-AbrB domains span residues 5–47 (THTP…PTET) and 76–119 (ASDT…DATE).

It belongs to the MraZ family. As to quaternary structure, forms oligomers.

The protein resides in the cytoplasm. Its subcellular location is the nucleoid. This is Transcriptional regulator MraZ from Cutibacterium acnes (strain DSM 16379 / KPA171202) (Propionibacterium acnes).